A 1358-amino-acid polypeptide reads, in one-letter code: Phosphoinositide 3-kinase regulatory subunit 4 (1358 aa).

G2 carries N-myristoyl glycine lipidation. One can recognise a Protein kinase domain in the interval 26–324; the sequence is FEYDKSLGST…AFPEVFYTFL (299 aa). ATP is bound by residues 32-40 and K53; that span reads LGSTRFFKV. D148 (proton acceptor) is an active-site residue. HEAT repeat units lie at residues 413–450, 458–495, 572–610, and 612–648; these read ILLD…LVQE, IYPE…TALR, KAND…YVGW, and SSSI…LGLL. Phosphoserine occurs at positions 808, 813, 853, and 865. A disordered region spans residues 875–899; the sequence is LPKTSDHEVVPTGKSPRSESSAGVC. WD repeat units lie at residues 991 to 1030, 1040 to 1079, 1093 to 1134, 1139 to 1178, 1182 to 1223, and 1237 to 1278; these read EHKS…GKTT, RIGG…LPKS, KEDG…NAWT, LKSG…PISS, PSRA…RRLT, and PSPH…RSYV. Residues 1307-1326 form a disordered region; that stretch reads KQKVGPSDDTPRRGPESLPV. The segment covering 1315 to 1326 has biased composition (basic and acidic residues); that stretch reads DTPRRGPESLPV. T1316 carries the phosphothreonine modification. One copy of the WD 7 repeat lies at 1327-1358; the sequence is GHHDIITDIATFQTTQGFIVTASRDGIVKVWK.

The protein belongs to the protein kinase superfamily. Ser/Thr protein kinase family. In terms of assembly, component of the PI3K (PI3KC3/PI3K-III/class III phosphatidylinositol 3-kinase) complex the core of which is composed of the catalytic subunit PIK3C3, the regulatory subunit PIK3R4 and BECN1 associating with additional regulatory/auxiliary subunits to form alternative complex forms. Alternative complex forms containing a fourth regulatory subunit in a mutually exclusive manner are PI3K complex I (PI3KC3-C1) containing ATG14, and PI3K complex II (PI3KC3-C2) containing UVRAG. PI3KC3-C1 displays a V-shaped architecture with PIK3R4 serving as a bridge between PIK3C3 and the ATG14:BECN1 subcomplex. Both, PI3KC3-C1 and PI3KC3-C2, can associate with further regulatory subunits, such as RUBCN, SH3GLB1/Bif-1, AMBRA1 and NRBF2. PI3KC3-C1 probably associates with PIK3CB. Interacts with RAB7A in the presence of PIK3C3/VPS34. Interacts with NRBF2. Interacts with ARMC3. It depends on Mn(2+) as a cofactor. In terms of processing, myristoylated. Probably autophosphorylated.

Its subcellular location is the late endosome. The protein localises to the cytoplasmic vesicle. The protein resides in the autophagosome. It is found in the membrane. It carries out the reaction L-seryl-[protein] + ATP = O-phospho-L-seryl-[protein] + ADP + H(+). The enzyme catalyses L-threonyl-[protein] + ATP = O-phospho-L-threonyl-[protein] + ADP + H(+). Regulatory subunit of the PI3K complex that mediates formation of phosphatidylinositol 3-phosphate; different complex forms are believed to play a role in multiple membrane trafficking pathways: PI3KC3-C1 is involved in initiation of autophagosomes and PI3KC3-C2 in maturation of autophagosomes and endocytosis. Involved in regulation of degradative endocytic trafficking and cytokinesis, probably in the context of PI3KC3-C2. This chain is Phosphoinositide 3-kinase regulatory subunit 4 (Pik3r4), found in Rattus norvegicus (Rat).